Consider the following 78-residue polypeptide: Delta-conotoxin-like S6.8 (78 aa).

Residues 1-22 (MKLTCMMIVAVLFLTAWTFVTA) form the signal peptide. The propeptide occupies 23 to 53 (DDSRNGLKNLFPKARHEMKNPDASKLNKRDG). Cystine bridges form between Cys-54–Cys-69, Cys-61–Cys-73, and Cys-68–Cys-77.

The protein belongs to the conotoxin O1 superfamily. As to expression, expressed by the venom duct.

Its subcellular location is the secreted. Functionally, delta-conotoxins bind to site 6 of voltage-gated sodium channels (Nav) and inhibit the inactivation process. In Conus striatus (Striated cone), this protein is Delta-conotoxin-like S6.8.